The primary structure comprises 153 residues: Ribonuclease P protein component (153 aa).

Belongs to the RnpA family. In terms of assembly, consists of a catalytic RNA component (M1 or rnpB) and a protein subunit.

It catalyses the reaction Endonucleolytic cleavage of RNA, removing 5'-extranucleotides from tRNA precursor.. RNaseP catalyzes the removal of the 5'-leader sequence from pre-tRNA to produce the mature 5'-terminus. It can also cleave other RNA substrates such as 4.5S RNA. The protein component plays an auxiliary but essential role in vivo by binding to the 5'-leader sequence and broadening the substrate specificity of the ribozyme. This Helicobacter acinonychis (strain Sheeba) protein is Ribonuclease P protein component.